A 90-amino-acid chain; its full sequence is Small ribosomal subunit protein bS18A (90 aa).

This sequence belongs to the bacterial ribosomal protein bS18 family. Part of the 30S ribosomal subunit. Forms a tight heterodimer with protein bS6.

In terms of biological role, binds as a heterodimer with protein bS6 to the central domain of the 16S rRNA, where it helps stabilize the platform of the 30S subunit. In Roseiflexus castenholzii (strain DSM 13941 / HLO8), this protein is Small ribosomal subunit protein bS18A.